The following is a 301-amino-acid chain: Bifunctional protein FolD (301 aa).

Residues 164–166 (GRS), S191, and I232 contribute to the NADP(+) site.

It belongs to the tetrahydrofolate dehydrogenase/cyclohydrolase family. As to quaternary structure, homodimer.

It catalyses the reaction (6R)-5,10-methylene-5,6,7,8-tetrahydrofolate + NADP(+) = (6R)-5,10-methenyltetrahydrofolate + NADPH. The catalysed reaction is (6R)-5,10-methenyltetrahydrofolate + H2O = (6R)-10-formyltetrahydrofolate + H(+). The protein operates within one-carbon metabolism; tetrahydrofolate interconversion. Its function is as follows. Catalyzes the oxidation of 5,10-methylenetetrahydrofolate to 5,10-methenyltetrahydrofolate and then the hydrolysis of 5,10-methenyltetrahydrofolate to 10-formyltetrahydrofolate. In Borrelia garinii subsp. bavariensis (strain ATCC BAA-2496 / DSM 23469 / PBi) (Borreliella bavariensis), this protein is Bifunctional protein FolD.